The chain runs to 286 residues: Shikimate dehydrogenase (NADP(+)) (286 aa).

Residues 20-22 (SLS) and Thr-67 contribute to the shikimate site. Catalysis depends on Lys-71, which acts as the Proton acceptor. Residues Asn-92 and Asp-107 each coordinate shikimate. NADP(+) is bound by residues 132 to 136 (GAGGA) and Met-228. Residue Tyr-230 coordinates shikimate. Gly-251 serves as a coordination point for NADP(+).

It belongs to the shikimate dehydrogenase family. Homodimer.

It carries out the reaction shikimate + NADP(+) = 3-dehydroshikimate + NADPH + H(+). The protein operates within metabolic intermediate biosynthesis; chorismate biosynthesis; chorismate from D-erythrose 4-phosphate and phosphoenolpyruvate: step 4/7. Involved in the biosynthesis of the chorismate, which leads to the biosynthesis of aromatic amino acids. Catalyzes the reversible NADPH linked reduction of 3-dehydroshikimate (DHSA) to yield shikimate (SA). In Geobacter sulfurreducens (strain ATCC 51573 / DSM 12127 / PCA), this protein is Shikimate dehydrogenase (NADP(+)).